The chain runs to 709 residues: Phosphomethylpyrimidine synthase (709 aa).

A compositionally biased stretch (polar residues) spans 1–13 (MNIRSNPDTTLPA). Disordered stretches follow at residues 1–21 (MNIRSNPDTTLPAVTTGPLPS) and 125–168 (DAPA…GREQ). Residues Asn274, Met303, Tyr332, His368, 388–390 (SRG), 429–432 (DGLR), and Glu468 contribute to the substrate site. His472 serves as a coordination point for Zn(2+). Tyr495 provides a ligand contact to substrate. Position 536 (His536) interacts with Zn(2+). [4Fe-4S] cluster-binding residues include Cys616, Cys619, and Cys624.

This sequence belongs to the ThiC family. Homodimer. Requires [4Fe-4S] cluster as cofactor.

It catalyses the reaction 5-amino-1-(5-phospho-beta-D-ribosyl)imidazole + S-adenosyl-L-methionine = 4-amino-2-methyl-5-(phosphooxymethyl)pyrimidine + CO + 5'-deoxyadenosine + formate + L-methionine + 3 H(+). It participates in cofactor biosynthesis; thiamine diphosphate biosynthesis. Functionally, catalyzes the synthesis of the hydroxymethylpyrimidine phosphate (HMP-P) moiety of thiamine from aminoimidazole ribotide (AIR) in a radical S-adenosyl-L-methionine (SAM)-dependent reaction. This chain is Phosphomethylpyrimidine synthase, found in Rhodopseudomonas palustris (strain BisB18).